Consider the following 247-residue polypeptide: Eukaryotic translation initiation factor 6-1 (247 aa).

The protein belongs to the eIF-6 family. In terms of assembly, monomer. Associates with the 60S ribosomal subunit.

The protein resides in the cytoplasm. The protein localises to the nucleus. Its subcellular location is the nucleolus. Functionally, binds to the 60S ribosomal subunit and prevents its association with the 40S ribosomal subunit to form the 80S initiation complex in the cytoplasm. May also be involved in ribosome biogenesis. The protein is Eukaryotic translation initiation factor 6-1 of Arabidopsis thaliana (Mouse-ear cress).